Consider the following 79-residue polypeptide: Cytochrome c oxidase subunit 7A1, mitochondrial (79 aa).

A mitochondrion-targeting transit peptide spans 1-21 (MQALRVSQALIRSFSSTARNR). Residues 22-46 (FQNRVREKQKLFQEDNDIPLYLKGG) are Mitochondrial matrix-facing. A helical transmembrane segment spans residues 47-75 (IVDNILYRVTMTLCLGGTVYSLYSLGWAS). Residues 76 to 79 (FPRN) are Mitochondrial intermembrane-facing.

Belongs to the cytochrome c oxidase VIIa family. Component of the complex IV (CIV, cytochrome c oxidase), a multisubunit enzyme composed of 14 subunits. The complex is composed of a catalytic core of 3 subunits MT-CO1, MT-CO2 and MT-CO3, encoded in the mitochondrial DNA, and 11 supernumerary subunits COX4I1 (or COX4I2), COX5A, COX5B, COX6A2 (or COX6A1), COX6B1 (or COX6B2), COX6C, COX7A1 (or COX7A2), COX7B, COX7C, COX8B and NDUFA4, which are encoded in the nuclear genome. The complex exists as a monomer or a dimer and forms supercomplexes (SCs) in the inner mitochondrial membrane with NADH-ubiquinone oxidoreductase (complex I, CI) and ubiquinol-cytochrome c oxidoreductase (cytochrome b-c1 complex, complex III, CIII), resulting in different assemblies (supercomplex SCI(1)III(2)IV(1) and megacomplex MCI(2)III(2)IV(2)).

The protein resides in the mitochondrion inner membrane. It functions in the pathway energy metabolism; oxidative phosphorylation. Functionally, component of the mitochondrial respiratory complex IV (CIV, also named cytochrome c oxidase complex), the last enzyme in the mitochondrial electron transport chain which drives oxidative phosphorylation. The CIV complex is the component of the respiratory chain that catalyzes the reduction of oxygen to water. Acts as an assembly factor that specifically drives the homodimerization of CIV complexes, mediating the formation of mitochondrial respiratory supercomplexes (respirasomes) containing two CIV: supercomplxes with two molecules of CIV show improved activity. Despite being highly expressed in brown adipose tissue, not required for thermogenesis. The sequence is that of Cytochrome c oxidase subunit 7A1, mitochondrial (COX7A1) from Homo sapiens (Human).